We begin with the raw amino-acid sequence, 715 residues long: Polyribonucleotide nucleotidyltransferase (715 aa).

Mg(2+)-binding residues include Asp-500 and Asp-506. The KH domain occupies Pro-567–Ala-634. In terms of domain architecture, S1 motif spans Gly-637–Lys-712.

The protein belongs to the polyribonucleotide nucleotidyltransferase family. Mg(2+) is required as a cofactor.

It localises to the cytoplasm. It catalyses the reaction RNA(n+1) + phosphate = RNA(n) + a ribonucleoside 5'-diphosphate. Its function is as follows. Involved in mRNA degradation. Catalyzes the phosphorolysis of single-stranded polyribonucleotides processively in the 3'- to 5'-direction. The chain is Polyribonucleotide nucleotidyltransferase from Acholeplasma laidlawii (strain PG-8A).